A 223-amino-acid chain; its full sequence is Adenylate kinase (223 aa).

10–15 (GSGKGT) is a binding site for ATP. The tract at residues 30 to 59 (ESGAIFRQHIGGGTELGKKAKEYIDRGDLV) is NMP. AMP is bound by residues S31, R36, 57 to 59 (DLV), 84 to 87 (GFPR), and Q91. Positions 125–164 (GRRLCKNDNNHPNNIFIDAIKPDGDVCRVCGGSLSARADD) are LID. Position 126 (R126) interacts with ATP. AMP-binding residues include R161 and R173. Position 209 (G209) interacts with ATP.

The protein belongs to the adenylate kinase family. Monomer.

Its subcellular location is the cytoplasm. It catalyses the reaction AMP + ATP = 2 ADP. The protein operates within purine metabolism; AMP biosynthesis via salvage pathway; AMP from ADP: step 1/1. Catalyzes the reversible transfer of the terminal phosphate group between ATP and AMP. Plays an important role in cellular energy homeostasis and in adenine nucleotide metabolism. This Nitratidesulfovibrio vulgaris (strain DSM 19637 / Miyazaki F) (Desulfovibrio vulgaris) protein is Adenylate kinase.